We begin with the raw amino-acid sequence, 153 residues long: Transcriptional repressor NrdR (153 aa).

A zinc finger lies at Cys-3–Cys-34. Residues Ile-49–Gln-139 enclose the ATP-cone domain.

This sequence belongs to the NrdR family. Zn(2+) serves as cofactor.

Functionally, negatively regulates transcription of bacterial ribonucleotide reductase nrd genes and operons by binding to NrdR-boxes. This chain is Transcriptional repressor NrdR, found in Fervidobacterium nodosum (strain ATCC 35602 / DSM 5306 / Rt17-B1).